A 350-amino-acid chain; its full sequence is Probable poly-beta-1,6-N-acetyl-D-glucosamine export protein (350 aa).

Helical transmembrane passes span 7-29 (ELVY…TQIT), 44-66 (FYIR…LLTT), 79-101 (TRVK…SESL), 116-138 (LLGQ…SYII), 145-167 (LFNS…YYFT), 187-204 (IIFG…MGYN), 211-233 (FLER…FIAL), 243-262 (SFSY…ILGI), 269-291 (MLFN…HPII), and 306-328 (TMVF…GMIL).

It belongs to the acyltransferase 3 family.

The protein localises to the cell membrane. Functionally, presumably involved in the export of the biofilm adhesin polysaccharide poly-beta-1,6-N-acetyl-D-glucosamine (PNAG, also referred to as PIA) across the cell membrane. The polypeptide is Probable poly-beta-1,6-N-acetyl-D-glucosamine export protein (icaC) (Staphylococcus aureus (strain MRSA252)).